Reading from the N-terminus, the 842-residue chain is Netrin receptor UNC5A (842 aa).

A signal peptide spans 1–25 (MAVRPGLWPALLGIVLAAWLRGSGA). Topologically, residues 26-306 (QQSATVANPV…ASGPEDVALY (281 aa)) are extracellular. The region spanning 44-141 (PHFLVEPEDV…SGTTKSQKAY (98 aa)) is the Ig-like domain. 3 disulfide bridges follow: cysteine 65–cysteine 126, cysteine 77–cysteine 124, and cysteine 170–cysteine 221. 2 N-linked (GlcNAc...) asparagine glycosylation sites follow: asparagine 107 and asparagine 218. One can recognise an Ig-like C2-type domain in the interval 155 to 234 (PLAKEVSLEQ…NIVARRRSAS (80 aa)). In terms of domain architecture, TSP type-1 spans 242–294 (DGSWSPWSKWSACGLDCTHWRSRECSDPAPRNGGEECQGTDLDTRNCTSDLCV). C-linked (Man) tryptophan glycans are attached at residues tryptophan 245, tryptophan 248, and tryptophan 251. 3 disulfide bridges follow: cysteine 254/cysteine 288, cysteine 258/cysteine 293, and cysteine 266/cysteine 278. Asparagine 287 is a glycosylation site (N-linked (GlcNAc...) asparagine). Residues 307 to 327 (VGLIAVAVCLVLLLLVLILVY) traverse the membrane as a helical segment. Topologically, residues 328-842 (CRKKEGLDSD…GLFTVSEAEC (515 aa)) are cytoplasmic. A ZU5 domain is found at 441–584 (NMTYGTFNFL…LGRFALVGEA (144 aa)). Residues 605-623 (SLEYNIRVYCLHDTHDALK) are interaction with DCC. The region spanning 761 to 841 (QKIISSLDPP…AGLFTVSEAE (81 aa)) is the Death domain.

The protein belongs to the unc-5 family. In terms of assembly, homodimer and homooligomer. Interacts with the cytoplasmic part of DCC. Interacts with MAGED1. Interacts with PRKCABP, possibly mediating some interaction with PKC. Interacts (via extracellular domain) with FLRT2 (via extracellular domain). Interacts (via extracellular domain) with FLRT3 (via extracellular domain). Post-translationally, phosphorylated on cytoplasmic tyrosine residues. Phosphorylated by PKC in vitro. Proteolytically cleaved by caspases during apoptosis. The cleavage does not take place when the receptor is associated with netrin ligand. Its cleavage by caspases is required to induce apoptosis. In terms of processing, the two extracellular TSRs of UNC5A contain WxxWxxWxxC motifs that can be C-mannosylated on all tryptophans. DPY19L1 preferentially mannosylates the first two tryptophans and DPY19L3 prefers the third. C-mannosylation by DPY19L1 is required for transport of UNC5A from the endoplasmic reticulum to the cell surface.

It localises to the cell membrane. The protein resides in the membrane raft. The protein localises to the cell projection. Its subcellular location is the neuron projection. Receptor for netrin required for axon guidance. Functions in the netrin signaling pathway and promotes neurite outgrowth in response to NTN1. Mediates axon repulsion of neuronal growth cones in the developing nervous system in response to netrin. Axon repulsion in growth cones may be mediated by its association with DCC that may trigger signaling for repulsion. It also acts as a dependence receptor required for apoptosis induction when not associated with netrin ligand. This is Netrin receptor UNC5A (UNC5A) from Homo sapiens (Human).